The chain runs to 178 residues: Histone deacetylase complex subunit SAP30L (178 aa).

2 disulfides stabilise this stretch: cysteine 24-cysteine 25 and cysteine 33-cysteine 69. The Atypical zinc-finger motif lies at 24 to 72 (CCLIEDAERCGRPAGNASFSKRIQKSISQRKLKLDIDKSVRHLYICDFH). The disordered stretch occupies residues 80–99 (RNKRKRKTSDDGGESPDHEV). Residues 81–86 (NKRKRK) carry the Nuclear localization signal (NLS) motif. Residues 83–85 (RKR) form an important for DNA and phosphoinositide binding region.

It belongs to the SAP30 family. Interacts with components of the histone deacetylase complex sin3a, hdac1 and hdac2. Binds histones and nucleosomes. Detected in embryos at 2dpf (at protein level). Widely expressed during embryogenesis and in adults.

It localises to the nucleus. It is found in the nucleolus. Functionally, functions as a transcription repressor, probably via its interaction with histone deacetylase complexes. Required for normal expression of numerous target genes. Involved in the functional recruitment of the class 1 Sin3-histone deacetylase complex (HDAC) to the nucleolus. Binds DNA, apparently without sequence-specificity, and bends bound double-stranded DNA. Binds phosphoinositol phosphates (phosphoinositol 3-phosphate, phosphoinositol 4-phosphate and phosphoinositol 5-phosphate) via the same basic sequence motif that mediates DNA binding and nuclear import. In Danio rerio (Zebrafish), this protein is Histone deacetylase complex subunit SAP30L (sap30l).